Consider the following 461-residue polypeptide: Argininosuccinate lyase (461 aa).

It belongs to the lyase 1 family. Argininosuccinate lyase subfamily.

Its subcellular location is the cytoplasm. The catalysed reaction is 2-(N(omega)-L-arginino)succinate = fumarate + L-arginine. It functions in the pathway amino-acid biosynthesis; L-arginine biosynthesis; L-arginine from L-ornithine and carbamoyl phosphate: step 3/3. This chain is Argininosuccinate lyase, found in Syntrophotalea carbinolica (strain DSM 2380 / NBRC 103641 / GraBd1) (Pelobacter carbinolicus).